A 64-amino-acid polypeptide reads, in one-letter code: DNA-directed RNA polymerase subunit Rpo10 (64 aa).

Cys7, Cys10, Cys45, and Cys46 together coordinate Zn(2+).

This sequence belongs to the archaeal Rpo10/eukaryotic RPB10 RNA polymerase subunit family. As to quaternary structure, part of the RNA polymerase complex. It depends on Zn(2+) as a cofactor.

It localises to the cytoplasm. The catalysed reaction is RNA(n) + a ribonucleoside 5'-triphosphate = RNA(n+1) + diphosphate. Its function is as follows. DNA-dependent RNA polymerase (RNAP) catalyzes the transcription of DNA into RNA using the four ribonucleoside triphosphates as substrates. In Natronomonas pharaonis (strain ATCC 35678 / DSM 2160 / CIP 103997 / JCM 8858 / NBRC 14720 / NCIMB 2260 / Gabara) (Halobacterium pharaonis), this protein is DNA-directed RNA polymerase subunit Rpo10.